Here is a 155-residue protein sequence, read N- to C-terminus: MRCPYCGHLEDRVVDSRETQDGQATRRRRACLSCERRFTTYERIEDVLPQVVKKDGRREAFDRAKIVEGVATACQKRPVSTEQVEALVSAVERQVQELGEREIRTTVIGEAVMQRLRTLDEVAYVRFASVYRAFRDVGEFMTELAGLARKDGEER.

A zinc finger lies at 3–34 (CPYCGHLEDRVVDSRETQDGQATRRRRACLSC). Positions 49 to 139 (PQVVKKDGRR…VYRAFRDVGE (91 aa)) constitute an ATP-cone domain.

Belongs to the NrdR family. Requires Zn(2+) as cofactor.

In terms of biological role, negatively regulates transcription of bacterial ribonucleotide reductase nrd genes and operons by binding to NrdR-boxes. In Anaeromyxobacter sp. (strain K), this protein is Transcriptional repressor NrdR.